The following is a 393-amino-acid chain: S-adenosylmethionine synthase (393 aa).

Residue histidine 16 participates in ATP binding. Aspartate 18 is a binding site for Mg(2+). Glutamate 44 provides a ligand contact to K(+). The L-methionine site is built by glutamate 57 and glutamine 100. Residues glutamine 100–histidine 110 are flexible loop. ATP contacts are provided by residues aspartate 167–lysine 169, arginine 238–phenylalanine 239, aspartate 247, arginine 253–lysine 254, alanine 270, and lysine 274. Aspartate 247 contributes to the L-methionine binding site. Lysine 278 is an L-methionine binding site.

This sequence belongs to the AdoMet synthase family. As to quaternary structure, homotetramer; dimer of dimers. Mg(2+) serves as cofactor. The cofactor is K(+).

The protein localises to the cytoplasm. The enzyme catalyses L-methionine + ATP + H2O = S-adenosyl-L-methionine + phosphate + diphosphate. It participates in amino-acid biosynthesis; S-adenosyl-L-methionine biosynthesis; S-adenosyl-L-methionine from L-methionine: step 1/1. Functionally, catalyzes the formation of S-adenosylmethionine (AdoMet) from methionine and ATP. The overall synthetic reaction is composed of two sequential steps, AdoMet formation and the subsequent tripolyphosphate hydrolysis which occurs prior to release of AdoMet from the enzyme. The protein is S-adenosylmethionine synthase of Paracidovorax citrulli (strain AAC00-1) (Acidovorax citrulli).